Reading from the N-terminus, the 771-residue chain is Ribonucleoside-diphosphate reductase large subunit (771 aa).

One can recognise an ATP-cone domain in the interval 1 to 92 (MFVIKRNGYK…VSNLHKETKK (92 aa)). Residues 5 to 6 (KR), 11 to 17 (ENVMFDK), T53, D57, and K88 each bind ATP. Residues S202 and S217 each contribute to the GDP site. Residues 226-228 (DSI), K243, and R256 each bind dTTP. N427 lines the GDP pocket. N427 (proton acceptor) is an active-site residue. The Cysteine radical intermediate role is filled by C429. GDP contacts are provided by residues E431 and 603 to 606 (TAST). Catalysis depends on E431, which acts as the Proton acceptor.

This sequence belongs to the ribonucleoside diphosphate reductase large chain family. In terms of assembly, interacts with RNR2/OPG047 subunit. The cofactor is Mg(2+).

It catalyses the reaction a 2'-deoxyribonucleoside 5'-diphosphate + [thioredoxin]-disulfide + H2O = a ribonucleoside 5'-diphosphate + [thioredoxin]-dithiol. Ribonucleoside-diphosphate reductase holoenzyme provides the precursors necessary for viral DNA synthesis. Allows virus growth in non-dividing cells. Catalyzes the biosynthesis of deoxyribonucleotides from the corresponding ribonucleotides. The chain is Ribonucleoside-diphosphate reductase large subunit (OPG080) from Homo sapiens (Human).